A 429-amino-acid chain; its full sequence is Adenylosuccinate synthetase (429 aa).

GTP contacts are provided by residues 12–18 (GDEGKGK) and 40–42 (GHT). Asp-13 serves as the catalytic Proton acceptor. Mg(2+) is bound by residues Asp-13 and Gly-40. IMP is bound by residues 13–16 (DEGK), 38–41 (NAGH), Thr-128, Arg-142, Gln-224, Thr-239, and Arg-303. Residue His-41 is the Proton donor of the active site. 299-305 (VTTGRPR) provides a ligand contact to substrate. GTP is bound by residues Arg-305, 331–333 (LLD), and 413–415 (SVG).

Belongs to the adenylosuccinate synthetase family. Homodimer. It depends on Mg(2+) as a cofactor.

It localises to the cytoplasm. The enzyme catalyses IMP + L-aspartate + GTP = N(6)-(1,2-dicarboxyethyl)-AMP + GDP + phosphate + 2 H(+). It participates in purine metabolism; AMP biosynthesis via de novo pathway; AMP from IMP: step 1/2. In terms of biological role, plays an important role in the de novo pathway of purine nucleotide biosynthesis. Catalyzes the first committed step in the biosynthesis of AMP from IMP. The chain is Adenylosuccinate synthetase from Clostridioides difficile (strain 630) (Peptoclostridium difficile).